Consider the following 961-residue polypeptide: ATPase 7, plasma membrane-type (961 aa).

The Cytoplasmic segment spans residues 1–64; the sequence is MTDIEALKAI…EKKESKILKF (64 aa). The helical transmembrane segment at 65 to 84 threads the bilayer; that stretch reads LGFMWNPLSWVMEAAALMAI. The Extracellular segment spans residues 85–96; the sequence is GLAHGGGKPADY. A helical transmembrane segment spans residues 97–117; it reads HDFVGIVVLLLINSTISFVEE. Over 118 to 246 the chain is Cytoplasmic; the sequence is NNAGNAAAAL…GHFQKVLTAI (129 aa). The chain crosses the membrane as a helical span at residues 247-267; the sequence is GNFCICSIAVGMAIEIVVIYG. The Extracellular segment spans residues 268–276; it reads LQKRGYRVG. Residues 277–294 form a helical membrane-spanning segment; the sequence is IDNLLVLLIGGIPIAMPT. Topologically, residues 295-643 are cytoplasmic; the sequence is VLSVTMAIGA…TSRAIFQRMK (349 aa). The 4-aspartylphosphate intermediate role is filled by Asp-332. 2 residues coordinate Mg(2+): Asp-588 and Asp-592. The chain crosses the membrane as a helical span at residues 644 to 665; that stretch reads NYTIYAVSITIRIVMGFMLLCV. The Extracellular portion of the chain corresponds to 666–670; the sequence is FWEFD. A helical transmembrane segment spans residues 671-693; it reads FPPFMVLVIAILNDGTIMTISKD. At 694–709 the chain is on the cytoplasmic side; sequence RVKPSPTPDCWKLKEI. A helical transmembrane segment spans residues 710–730; it reads FATGVVLGAYLAIMTVVFFWA. The Extracellular segment spans residues 731–764; that stretch reads AYETNFFHNIFHVRNFNQHHFKMKDKKVAAHLNE. Residues 765-785 form a helical membrane-spanning segment; it reads QMASAVYLQVSTISQALIFVT. Over 786 to 797 the chain is Cytoplasmic; that stretch reads RSRSWSFVERPG. A helical transmembrane segment spans residues 798 to 818; sequence FLLVIAFLIAQLVASVISAMA. Topologically, residues 819–826 are extracellular; the sequence is NWPFAGIR. Residues 827-847 traverse the membrane as a helical segment; the sequence is SIGWGWTGVIWIFNIVTYMLL. The Cytoplasmic segment spans residues 848–961; that stretch reads DPIKFLVRYA…EDPNSNNYTI (114 aa). Thr-894 carries the phosphothreonine modification. Ser-910 and Ser-942 each carry phosphoserine. Residues 959–961 form an interaction with 14-3-3 proteins region; sequence YTI. Phosphothreonine is present on Thr-960.

It belongs to the cation transport ATPase (P-type) (TC 3.A.3) family. Type IIIA subfamily. Binds to 14-3-3 proteins. The binding is induced by phosphorylation of Thr-960. Binding to 14-3-3 proteins activates the H(+)-ATPase. As to expression, expressed in guard cells, roots and leaves, and barely in mesophyll cells.

It localises to the membrane. The catalysed reaction is ATP + H2O + H(+)(in) = ADP + phosphate + 2 H(+)(out). Its function is as follows. The plasma membrane H(+) ATPase of plants and fungi generates a proton gradient that drives the active transport of nutrients by H(+)-symport. The resulting external acidification and/or internal alkinization may mediate growth responses. This Arabidopsis thaliana (Mouse-ear cress) protein is ATPase 7, plasma membrane-type (AHA7).